The following is a 97-amino-acid chain: MSRACELTGKTVQYGNNVSHANNKTRRRFLPNLCNVTLISEVLQQSYRLRVSASALRSVEHRGGLDSFLVRADDKELSQRARLLKRQIVKKKAEQAA.

It belongs to the bacterial ribosomal protein bL28 family.

This Bartonella quintana (strain Toulouse) (Rochalimaea quintana) protein is Large ribosomal subunit protein bL28.